The primary structure comprises 874 residues: Valine--tRNA ligase (874 aa).

Residues 1–10 (MTENSQQQPP) show a composition bias toward polar residues. The segment at 1–23 (MTENSQQQPPASEPELPTQYAPA) is disordered. The 'HIGH' region motif lies at 57-67 (PNVTGSLHLGH). Residues 531-535 (KMSKS) carry the 'KMSKS' region motif. Lys-534 provides a ligand contact to ATP. Positions 806–871 (IDIVAERKRL…ARIQAQLDRM (66 aa)) form a coiled coil.

Belongs to the class-I aminoacyl-tRNA synthetase family. ValS type 1 subfamily. Monomer.

It localises to the cytoplasm. It carries out the reaction tRNA(Val) + L-valine + ATP = L-valyl-tRNA(Val) + AMP + diphosphate. Its function is as follows. Catalyzes the attachment of valine to tRNA(Val). As ValRS can inadvertently accommodate and process structurally similar amino acids such as threonine, to avoid such errors, it has a 'posttransfer' editing activity that hydrolyzes mischarged Thr-tRNA(Val) in a tRNA-dependent manner. This chain is Valine--tRNA ligase, found in Streptomyces avermitilis (strain ATCC 31267 / DSM 46492 / JCM 5070 / NBRC 14893 / NCIMB 12804 / NRRL 8165 / MA-4680).